The following is a 440-amino-acid chain: MSEFSQTVPELVAWARKNDFSISLPVDRLSFLLAVATLNGERLDGEMSEGELVDAFRHVSDAFEQTSETIGVRANNAINDMVRQRLLNRFTSEQAEGNAIYRLTPLGIGITDYYIRQREFSTLRLSMQLSIVAGELKRAADAAEEGGDEFHWHRNVYAPLKYSVAEIFDSIDLTQRLMDEQQQQVKDDIAQLLNKDWRAAISSCELLLSETSGTLRELQDTLEAAGDKLQANLLRIQDATMTHDDLHFVDRLVFDLQSKLDRIISWGQQSIDLWIGYDRHVHKFIRTAIDMDKNRVFAQRLRQSVQTYFDEPWALSYANADRLLDMRDEEMALRDEEVTGELPPDLEYEEFNEIREQLAAIIEEQLAVYKTRQVPLDLGLVVREYLSQYPRARHFDVARIVIDQAVRLGVAQADFTGLPAKWQPINDYGAKVQAHVIDKY.

The interval 208–236 is leucine-zipper; that stretch reads LSETSGTLRELQDTLEAAGDKLQANLLRI.

It belongs to the MukF family. In terms of assembly, interacts, and probably forms a ternary complex, with MukE and MukB via its C-terminal region. The complex formation is stimulated by calcium or magnesium. It is required for an interaction between MukE and MukB.

Its subcellular location is the cytoplasm. The protein localises to the nucleoid. Functionally, involved in chromosome condensation, segregation and cell cycle progression. May participate in facilitating chromosome segregation by condensation DNA from both sides of a centrally located replisome during cell division. Not required for mini-F plasmid partitioning. Probably acts via its interaction with MukB and MukE. Overexpression results in anucleate cells. It has a calcium binding activity. In Escherichia coli O157:H7, this protein is Chromosome partition protein MukF.